Reading from the N-terminus, the 505-residue chain is Neuronal acetylcholine receptor subunit alpha-3 (505 aa).

The N-terminal stretch at 1–31 is a signal peptide; sequence MGSGPLSLPLALSPPRLLLLLLLSLLPVARA. Over 32–250 the chain is Extracellular; it reads SEAEHRLFER…PLFYTINLII (219 aa). N-linked (GlcNAc...) asparagine glycans are attached at residues Asn-55 and Asn-172. Cystine bridges form between Cys-159–Cys-173 and Cys-223–Cys-224. Residues 251–266 traverse the membrane as a helical segment; the sequence is PCLLISFLTVLVFYLP. The Cytoplasmic portion of the chain corresponds to 267 to 268; the sequence is SD. The helical transmembrane segment at 269–285 threads the bilayer; it reads CGEKVTLCISVLLSLTV. The Extracellular segment spans residues 286–307; that stretch reads FLLVITETIPSTSLVIPLIGEY. Residues 308–326 form a helical membrane-spanning segment; sequence LLFTMIFVTLSIVITVFVL. Over 327–474 the chain is Cytoplasmic; the sequence is NVHYRTPTTH…QDDWKYVAMV (148 aa). A phosphoserine mark is found at Ser-413 and Ser-416. A helical membrane pass occupies residues 475 to 493; it reads IDRIFLWVFTLVCILGTAG. The Extracellular portion of the chain corresponds to 494 to 505; that stretch reads LFLQPLMAREDA.

Belongs to the ligand-gated ion channel (TC 1.A.9) family. Acetylcholine receptor (TC 1.A.9.1) subfamily. Alpha-3/CHRNA3 sub-subfamily. Neuronal AChR is composed of two different types of subunits: alpha and beta. CHRNA3/Alpha-3 subunit can be combined to CHRNA5/alpha-5, CHRNB2/beta-2 CHRNB3/beta-3 or CHRNB4/beta-4 to give rise to functional receptors. Forms stoichiometries such as (CHRNA3)2:(CHRNB4)3 or (CHRNA3:CHRNB4)2:CHRNB3. Part of a complex composed of STUB1/CHIP, VCP/p97, CHRNA3, and UBXN2A that modulates the ubiquitination and endoplasmic reticulum-associated degradation (ERAD) of CHRNA3. Within the complex UBXN2A acts as a scaffold protein required for the interaction of CHRNA3 with VCP/p97, this interaction also inhibits CHRNA3 ubiquitination by STUB1/CHIP and subsequently ERAD. Interacts with UBXN2A (via SEP domain), the interaction is required for the interaction of CHRNA3 in the STUB1:VCP:UBXN2A complex. Interacts with RIC3; which is required for proper folding and assembly. Interacts with LYPD6. In terms of processing, ubiquitinated; by STUB1/CHIP and thereafter degraded by the 26S proteosome complex.

The protein localises to the synaptic cell membrane. Its subcellular location is the cell membrane. It is found in the endoplasmic reticulum. It localises to the golgi apparatus. The enzyme catalyses Ca(2+)(in) = Ca(2+)(out). It carries out the reaction K(+)(in) = K(+)(out). The catalysed reaction is Na(+)(in) = Na(+)(out). With respect to regulation, activated by a myriad of ligands such as acetylcholine, cytisine, nicotine, choline and epibatidine. The heteropentamer CHRNA3:CHRNB2 activity is blocked by alpha-conotoxins ImI, ImII, PnIA, GID and MII. The heteropentamer CHRNA3:CHRNB4 activity is blocked by the alpha-conotoxin ImI and AuIB. Component of neuronal acetylcholine receptors (nAChRs) that function as pentameric, ligand-gated cation channels with high calcium permeability among other activities. nAChRs are excitatory neurotrasnmitter receptors formed by a collection of nAChR subunits known to mediate synaptic transmission in the nervous system and the neuromuscular junction. Each nAchR subunit confers differential attributes to channel properties, including activation, deactivation and desensitization kinetics, pH sensitivity, cation permeability, and binding to allosteric modulators. CHRNA3 forms heteropentameric neuronal acetylcholine receptors with CHRNB2 and CHRNB4, with CHRNA5, and CHRNB3 as accesory subunits. CHRNA3:CHRNB4 being predominant in neurons of the autonomic ganglia, it is known as ganglionic nicotinic receptor. CHRNA3:CHRNB4 or CHRNA3:CHRNA5:CHRNB4 play also an important role in the habenulo-interpeduncular tract, modulating the mesolimbic dopamine system and affecting reward circuits and addiction. Hypothalamic CHRNA3:CHRNB4 nAChR activation by nicotine leads to activation of POMC neurons and a decrease in food intake. Also expressed in the urothelium where it modulates reflex bladder activity by increasing intracellular calcium through extracellular influx and basal ATP release. In Homo sapiens (Human), this protein is Neuronal acetylcholine receptor subunit alpha-3.